The primary structure comprises 508 residues: Cytochrome P450 monooxygenase BipB (508 aa).

Residues 11–31 (ELAWLLLGPLVLFYVFKLFIY) traverse the membrane as a helical segment. Residue cysteine 448 participates in heme binding.

Belongs to the cytochrome P450 family. Heme is required as a cofactor.

Its subcellular location is the membrane. It functions in the pathway sesquiterpene biosynthesis. Cytochrome P450 monooxygenase; part of the minimal biosynthetic bip cluster that mediates the biosynthesis of bridged polycyclic sesquiterpenoids derived from sativene, isosativene, and longifolene. The sesquiterpene cyclase BipA acts as a versatile cyclase that converts farnesyl diphosphate (FPP) into (-)-sativene as the dominant product and (-)-isosativene and (-)-longifolene as minor ones. The cytochrome P450 monooxygenase BipB then hydroxylates different enantiomeric sesquiterpenes, such as (-)-longifolene and (+)-longifolene, at C-15 and C-14. The C-15- or both C-15- and C-14-hydroxylated products are further oxidized by unclustered oxidases, resulting in a structurally diverse array of sesquiterpenoids. The BipB-catalyzed hydroxylation at C-15 serves as an initiator for the oxidation by the unclustered oxidases. The chain is Cytochrome P450 monooxygenase BipB from Cochliobolus sativus (Common root rot and spot blotch fungus).